The primary structure comprises 1310 residues: PAN2-PAN3 deadenylation complex catalytic subunit pan2 (1310 aa).

WD repeat units lie at residues 22-61 (YHAG…RFTA), 67-105 (ETDG…SIRH), 106-144 (ESMQ…GEVV), and 145-184 (KELP…IKKQ). Positions 318–463 (QFTEIGIPPR…NNDHWSLRPE (146 aa)) are linker. The USP domain maps to 463-850 (EAPPEYRICE…MPVVVMFQVK (388 aa)). Residues His-525, Cys-530, Cys-535, Cys-538, Cys-645, Cys-648, Cys-700, and Cys-703 each contribute to the Zn(2+) site. The region spanning 897 to 1070 (IAIDTEFIRL…EDAQTALKLY (174 aa)) is the Exonuclease domain. Residues Asp-900, Glu-902, Asp-1009, and Asp-1062 each coordinate a divalent metal cation. The segment at 1121-1169 (TPPVPAPGTTEGSFEISNSSTATTGGSALSATGGMGSASASSSMPSTPV) is disordered. Positions 1139–1168 (SSTATTGGSALSATGGMGSASASSSMPSTP) are enriched in low complexity.

Belongs to the peptidase C19 family. PAN2 subfamily. As to quaternary structure, forms a heterotrimer with an asymmetric homodimer of the regulatory subunit par-2/pan3 to form the poly(A)-nuclease (PAN) deadenylation complex. It depends on a divalent metal cation as a cofactor.

Its subcellular location is the cytoplasm. It catalyses the reaction Exonucleolytic cleavage of poly(A) to 5'-AMP.. Positively regulated by the regulatory subunit par-2/pan3. Functionally, catalytic subunit of the poly(A)-nuclease (PAN) deadenylation complex, one of two cytoplasmic mRNA deadenylases involved in mRNA turnover. PAN specifically shortens poly(A) tails of RNA and the activity is stimulated by poly(A)-binding protein pabp-1. PAN deadenylation is followed by rapid degradation of the shortened mRNA tails by the CCR4-NOT complex. Deadenylated mRNAs are then degraded by two alternative mechanisms, namely exosome-mediated 3'-5' exonucleolytic degradation, or deadenylation-dependent mRNA decaping and subsequent 5'-3' exonucleolytic degradation by rgb-30/xrn1. May also be involved in post-transcriptional maturation of mRNA poly(A) tails. The sequence is that of PAN2-PAN3 deadenylation complex catalytic subunit pan2 (par-1) from Neurospora crassa (strain ATCC 24698 / 74-OR23-1A / CBS 708.71 / DSM 1257 / FGSC 987).